Consider the following 348-residue polypeptide: Malyl-CoA/beta-methylmalyl-CoA/citramalyl-CoA lyase (348 aa).

Residues 32–33, lysine 40, and arginine 92 each bind substrate; that span reads HF. 2 residues coordinate Mg(2+): glutamate 157 and aspartate 184. Substrate-binding positions include 183-184 and leucine 274; that span reads AD.

The protein belongs to the HpcH/HpaI aldolase family. In terms of assembly, homohexamer. Dimer of trimers. Mg(2+) serves as cofactor. It depends on Mn(2+) as a cofactor.

The enzyme catalyses (S)-malyl-CoA = glyoxylate + acetyl-CoA. The catalysed reaction is (2R,3S)-beta-methylmalyl-CoA = propanoyl-CoA + glyoxylate. It catalyses the reaction (3S)-citramalyl-CoA = pyruvate + acetyl-CoA. With respect to regulation, inhibited by oxalate. In terms of biological role, involved in the 3-hydroxypropionate cycle used for autotrophic carbon dioxide fixation, and in the glyoxylate assimilation cycle used to regenerate acetyl-CoA and produce pyruvate as universal precursor for biosynthesis. As a part of the 3-hydroxypropionate cycle, it catalyzes the cleavage of (S)-malyl-CoA to yield acetyl-CoA and glyoxylate. As part of the glyoxylate assimilation cycle, it catalyzes the condensation of glyoxylate with propionyl-CoA to yield (2R,3S)-beta-methylmalyl-CoA, and catalyzes the cleavage of (S)-citramalyl-CoA to yield acetyl-CoA and pyruvate. The sequence is that of Malyl-CoA/beta-methylmalyl-CoA/citramalyl-CoA lyase (mcl) from Chloroflexus aurantiacus.